The following is a 435-amino-acid chain: NADH-quinone oxidoreductase subunit D (435 aa).

Belongs to the complex I 49 kDa subunit family. As to quaternary structure, NDH-1 is composed of 14 different subunits. Subunits NuoB, C, D, E, F, and G constitute the peripheral sector of the complex.

The protein localises to the cell inner membrane. The enzyme catalyses a quinone + NADH + 5 H(+)(in) = a quinol + NAD(+) + 4 H(+)(out). In terms of biological role, NDH-1 shuttles electrons from NADH, via FMN and iron-sulfur (Fe-S) centers, to quinones in the respiratory chain. The immediate electron acceptor for the enzyme in this species is believed to be ubiquinone. Couples the redox reaction to proton translocation (for every two electrons transferred, four hydrogen ions are translocated across the cytoplasmic membrane), and thus conserves the redox energy in a proton gradient. This Xylella fastidiosa (strain 9a5c) protein is NADH-quinone oxidoreductase subunit D.